The chain runs to 491 residues: FAD-dependent monooxygenase idtM (491 aa).

Glu-34, Gly-48, Arg-107, Asp-307, and Ala-320 together coordinate FAD. Residues 448 to 468 (ILSLVYVVAGLAMMYMSIYLV) traverse the membrane as a helical segment.

The protein belongs to the paxM FAD-dependent monooxygenase family. Requires FAD as cofactor.

The protein resides in the membrane. Its pathway is secondary metabolite biosynthesis. FAD-dependent monooxygenase; part of the gene cluster that mediates the biosynthesis of paspalitrems, indole-diterpene (IDT) mycotoxins that are potent tremorgens in mammals. The geranylgeranyl diphosphate (GGPP) synthase idtG is proposed to catalyze the first step in IDT biosynthesis via catalysis of a series of iterative condensations of isopentenyl diphosphate (IPP) with dimethylallyl diphosphate (DMAPP), geranyl diphosphate (GPP), and farnesyl diphosphate (FPP), to form GGPP. Condensation of indole-3-glycerol phosphate with GGPP by the prenyltransferase idtC then forms 3-geranylgeranylindole (3-GGI). Epoxidation of the two terminal alkenes of the geranylgeranyl moiety by the FAD-dependent monooxygenase idtM, and cyclization by the terpene cyclase idtB then leads to the production of paspaline. The cytochrome P450 monooxygenase idtP then catalyzes oxidative elimination of the pendant methyl group at C-12 of paspaline and generates the C-10 ketone to yield 13-desoxypaxilline. The cytochrome P450 monooxygenase idtQ may catalyze the C-13 oxidation of 13-desoxypaxilline to afford paxilline. Considering that both paspalicine and paxilline were detected in C.paspali, idtQ also catalyzes the formation of paspalinine from 13-desoxypaxilline via paspalicine as an intermediate. Finally, the alpha-prenyltransferase idtF prenylates paspalinine at the C-20 or the C-21 positions to yield paspalitrems A and C, respectively. The hydroxylation of paspalitrem A at C-32 by a still unknown oxidase affords paspalitrem B. The polypeptide is FAD-dependent monooxygenase idtM (Claviceps paspali (Rye ergot fungus)).